A 146-amino-acid polypeptide reads, in one-letter code: Decarboxylase dmxR15 (146 aa).

An EthD domain is found at 31–126; that stretch reads PGMSEGDYRN…MHDHEVFADT (96 aa).

It belongs to the tpcK family.

The catalysed reaction is atrochrysone carboxylate + H(+) = atrochrysone + CO2. The protein operates within secondary metabolite biosynthesis. In terms of biological role, decarboxylase; part of the gene cluster that mediates the biosynthesis of the dimeric xanthones cryptosporioptides. The pathway begins with the synthesis of atrochrysone thioester by the polyketide synthase dmx-nrPKS. The atrochrysone carboxyl ACP thioesterase dmxR1 then breaks the thioester bond and releases the atrochrysone carboxylic acid from dmx-nrPKS. Atrochrysone carboxylic acid is decarboxylated by the decarboxylase dmxR15, and oxidized by the anthrone oxygenase dmxR16 to yield emodin. Emodin is then reduced to emodin hydroquinone by the oxidoreductase dmxR7. A-ring reduction by the short chain dehydrogenase dmxR18, dehydration by the scytalone dehydratase-like protein dmxR17 and probable spontaneous re-oxidation, results in overall deoxygenation to chrysophanol. Baeyer-Villiger oxidation by the Baeyer-Villiger monooxygenase (BVMO) dmxR6 then yields monodictylactone in equilibrium with monodictyphenone. In the case of the cryptosporioptides biosynthesis, monodictylactone is reduced at C-12 to an alcohol (by the short chain dehydrogenases dmxR12 or dmxR8) and hydroxylated at C-5 by dmxR9, yielding the electron-rich aromatic which could eliminate H(2)O to form the ortho-quinonemethide, followed by tautomerisation to paraquinone and complete the formal reduction to produce the 10-methylgroup. Conjugate addition of C-4a-OH to the resulting paraquinone by the monooxygenase dmxR10 then gives cyclohexadienone, which is then reduced at C-5 by the short chain dehydrogenase dmxR3 to give the dihydroxanthone. The 6,7-epoxide in the cryptosporioptides could be introduced by the cytochrome P450 monooxygenase dmxL3. The highly reducing PKS dmxL2 manufactures butyrate, which is further carboxylated by dmxL1 to form ethylmalonate. It is not yet clear whether the carboxylation occurs while the butyrate is attached to the ACP of dmxL2, but this unusual fungal metabolite could then be esterified to O-5 by the O-acetyltransferase dmxR13. Finally, dimerization performed by dmxR5 gives the observed dimers cryptosporioptides A, B and C as the final products of the pathway. This chain is Decarboxylase dmxR15, found in Cryptosporiopsis sp. (strain 8999).